Reading from the N-terminus, the 550-residue chain is Arginine--tRNA ligase (550 aa).

A 'HIGH' region motif is present at residues 130–140 (ANPTGPIHIGG).

Belongs to the class-I aminoacyl-tRNA synthetase family. In terms of assembly, monomer.

The protein localises to the cytoplasm. The catalysed reaction is tRNA(Arg) + L-arginine + ATP = L-arginyl-tRNA(Arg) + AMP + diphosphate. The polypeptide is Arginine--tRNA ligase (argS) (Mycobacterium leprae (strain TN)).